The following is a 123-amino-acid chain: uncharacterized protein (123 aa).

This is an uncharacterized protein from Escherichia coli O157:H7.